A 102-amino-acid polypeptide reads, in one-letter code: Small ribosomal subunit protein eS24 (102 aa).

This sequence belongs to the eukaryotic ribosomal protein eS24 family.

The polypeptide is Small ribosomal subunit protein eS24 (Halorubrum lacusprofundi (strain ATCC 49239 / DSM 5036 / JCM 8891 / ACAM 34)).